The chain runs to 588 residues: 2-isopropylmalate synthase (588 aa).

A Pyruvate carboxyltransferase domain is found at 40–314 (PRWCAVDLRD…DPQIDFSDLD (275 aa)). Mg(2+)-binding residues include Asp-49, His-253, His-255, and Asn-289. The segment at 456–588 (APLDRVEEKW…TVREPELAAV (133 aa)) is regulatory domain.

The protein belongs to the alpha-IPM synthase/homocitrate synthase family. LeuA type 2 subfamily. In terms of assembly, homodimer. Requires Mg(2+) as cofactor.

It is found in the cytoplasm. The enzyme catalyses 3-methyl-2-oxobutanoate + acetyl-CoA + H2O = (2S)-2-isopropylmalate + CoA + H(+). The protein operates within amino-acid biosynthesis; L-leucine biosynthesis; L-leucine from 3-methyl-2-oxobutanoate: step 1/4. Functionally, catalyzes the condensation of the acetyl group of acetyl-CoA with 3-methyl-2-oxobutanoate (2-ketoisovalerate) to form 3-carboxy-3-hydroxy-4-methylpentanoate (2-isopropylmalate). The chain is 2-isopropylmalate synthase from Clavibacter michiganensis subsp. michiganensis (strain NCPPB 382).